Consider the following 340-residue polypeptide: Putative Ig-like domain-containing protein C1 (340 aa).

Positions 207–294 constitute an Ig-like domain; that stretch reads PTVTVTGIER…SSPRVMVPTI (88 aa).

This chain is Putative Ig-like domain-containing protein C1, found in Sus scrofa (Pig).